The chain runs to 280 residues: Large ribosomal subunit protein uL2 (280 aa).

Disordered stretches follow at residues 1–58 and 226–280; these read MAIR…GGGH and MNPV…KHGR. Basic residues-rich tracts occupy residues 37–58 and 268–280; these read LHGH…GGGH and IVRR…KHGR.

It belongs to the universal ribosomal protein uL2 family. Part of the 50S ribosomal subunit. Forms a bridge to the 30S subunit in the 70S ribosome.

Its function is as follows. One of the primary rRNA binding proteins. Required for association of the 30S and 50S subunits to form the 70S ribosome, for tRNA binding and peptide bond formation. It has been suggested to have peptidyltransferase activity; this is somewhat controversial. Makes several contacts with the 16S rRNA in the 70S ribosome. The polypeptide is Large ribosomal subunit protein uL2 (Mycobacterium avium (strain 104)).